The chain runs to 70 residues: Homeobox protein CDX (70 aa).

The homeobox DNA-binding region spans 1-60 (PDKYRVVYTDYQRLELEKEFHYSRYITMNRKAELAKSLDLTERQIKIWFQNRRAKERKIN).

This sequence belongs to the Caudal homeobox family.

It is found in the nucleus. The sequence is that of Homeobox protein CDX (CDX) from Lineus sanguineus (Ribbon worm).